Consider the following 115-residue polypeptide: Macroconotoxin Mu8.1 (115 aa).

The signal sequence occupies residues 1–21; that stretch reads MDMKMTFSGLVLVVLVTTVVG. A propeptide spanning residues 22–26 is cleaved from the precursor; sequence SSVRR. 5 disulfides stabilise this stretch: cysteine 36/cysteine 77, cysteine 44/cysteine 60, cysteine 48/cysteine 56, cysteine 83/cysteine 115, and cysteine 87/cysteine 97. A Zn(2+)-binding site is contributed by glutamate 40. Histidine 68 lines the Zn(2+) pocket.

As to quaternary structure, mostly found as a homodimer in solution; non-covalently bound. In terms of tissue distribution, expressed by the venom duct.

Its subcellular location is the secreted. Functionally, modestly and reversibly inhibits Cav2.3/CACNA1E (IC(50)=5.8 uM) recombinantly expressed in HEK293 cells without affecting the voltage dependence of activation. In mouse DRG sensory neurons, modulates depolarization-induced calcium influx. This Conus mucronatus (Pointed cone) protein is Macroconotoxin Mu8.1.